A 252-amino-acid chain; its full sequence is Carboxymethylenebutenolidase (252 aa).

Positions 1–28 (MCHNKSSAPPTPAHISIQQNRTPGTDPV) are disordered. Residues Cys-126, Asp-183, and His-214 contribute to the active site.

The protein belongs to the dienelactone hydrolase family.

The catalysed reaction is 2-(5-oxo-2,5-dihydrofuran-2-ylidene)acetate + H2O = 4-oxohex-2-enedioate + H(+). It participates in aromatic compound metabolism; 3-chlorocatechol degradation. Ring cleavage of cyclic ester dienelactone to produce maleylacetate. The protein is Carboxymethylenebutenolidase (clcD) of Rhodococcus opacus (Nocardia opaca).